A 780-amino-acid polypeptide reads, in one-letter code: Endonuclease MutS2 (780 aa).

334 to 341 (GPNAGGKT) contacts ATP. Residues 706–780 (IDIRGMRSVD…GGSGKTIVEI (75 aa)) form the Smr domain.

This sequence belongs to the DNA mismatch repair MutS family. MutS2 subfamily. In terms of assembly, homodimer. Binds to stalled ribosomes, contacting rRNA.

Functionally, endonuclease that is involved in the suppression of homologous recombination and thus may have a key role in the control of bacterial genetic diversity. Its function is as follows. Acts as a ribosome collision sensor, splitting the ribosome into its 2 subunits. Detects stalled/collided 70S ribosomes which it binds and splits by an ATP-hydrolysis driven conformational change. Acts upstream of the ribosome quality control system (RQC), a ribosome-associated complex that mediates the extraction of incompletely synthesized nascent chains from stalled ribosomes and their subsequent degradation. Probably generates substrates for RQC. The protein is Endonuclease MutS2 of Borreliella burgdorferi (strain ATCC 35210 / DSM 4680 / CIP 102532 / B31) (Borrelia burgdorferi).